The chain runs to 375 residues: MTLPPAYVDELNLLNREVTTKQPTDILRFCADYFNERLAKREEADDDGPRSKPLGGGFREPGFGSSSRSTDGSLFRSSFADTSSEGPGSASSEPAAPFTRRTSVSAESIAPGAFAGAASGVASNNLSAEQLESLYKSVSHNFLFGNLDEEACRSVLQSLQEKKCDSGEKIITQGDEGDYFYIVESGAVEFIKDGVKVNSSGPGSSFGELALMYNAPRAATVVATQPCVLWSLDRVTFRKILLDGTHQRRSMYDGFLKEVPILSDLGSYERNKLADALTSQVVEPGTAVITEGEAGDAFYLVESGEAEVTKKGESGVVATLKQGDYFGEVALLNDLPRQATVTAKTKLKVATLGKDGFQRLLGPVLDHLKENDPTK.

The interval R28 to F142 is dimerization and phosphorylation. Residues R41–R50 show a composition bias toward basic and acidic residues. Positions R41–T102 are disordered. Residues G64–T82 show a composition bias toward polar residues. Residues S83–P97 are compositionally biased toward low complexity. S103 carries the phosphoserine modification. Residues L143–E258, E208, R217, I261–K375, E328, and R337 each bind 3',5'-cyclic AMP.

Belongs to the cAMP-dependent kinase regulatory chain family. Tetramer, composed of 2 regulatory (R) and 2 catalytic (C) subunits. In the presence of cAMP it dissociates into 2 active monomeric C subunits and an R dimer.

The sequence is that of cAMP-dependent protein kinase regulatory subunit (PKAR) from Yarrowia lipolytica (strain CLIB 122 / E 150) (Yeast).